The following is a 150-amino-acid chain: D-aminoacyl-tRNA deacylase (150 aa).

The Gly-cisPro motif, important for rejection of L-amino acids motif lies at 136–137 (GP).

This sequence belongs to the DTD family. Homodimer.

It is found in the cytoplasm. It carries out the reaction glycyl-tRNA(Ala) + H2O = tRNA(Ala) + glycine + H(+). The enzyme catalyses a D-aminoacyl-tRNA + H2O = a tRNA + a D-alpha-amino acid + H(+). Its function is as follows. An aminoacyl-tRNA editing enzyme that deacylates mischarged D-aminoacyl-tRNAs. Also deacylates mischarged glycyl-tRNA(Ala), protecting cells against glycine mischarging by AlaRS. Acts via tRNA-based rather than protein-based catalysis; rejects L-amino acids rather than detecting D-amino acids in the active site. By recycling D-aminoacyl-tRNA to D-amino acids and free tRNA molecules, this enzyme counteracts the toxicity associated with the formation of D-aminoacyl-tRNA entities in vivo and helps enforce protein L-homochirality. This Staphylococcus carnosus (strain TM300) protein is D-aminoacyl-tRNA deacylase.